We begin with the raw amino-acid sequence, 259 residues long: HTH-type quorum sensing-dependent transcriptional regulator VjbR (259 aa).

Residues 76–179 (KNYFAIDPVF…AGIIHGTVCG (104 aa)) form a C12-HSL binding region. The region spanning 183–248 (ANSVASLLTP…SAVATALSLG (66 aa)) is the HTH luxR-type domain. The segment at residues 207–226 (DGEIAEILSIARWTVVTYLQ) is a DNA-binding region (H-T-H motif).

Its function is as follows. Transcriptional regulator involved in the global control of Brucella gene expression. Mediates the effects of the quorum sensing autoinducer C12-HSL (N-dodecanoyl-homoserine lactone) on a large and diverse number of genes. The sequence is that of HTH-type quorum sensing-dependent transcriptional regulator VjbR (vjbR) from Brucella ovis (strain ATCC 25840 / 63/290 / NCTC 10512).